The following is a 297-amino-acid chain: Ezy-1 protein (297 aa).

Disordered stretches follow at residues 1 to 34, 115 to 151, and 255 to 297; these read MAAV…GDGG, FTGK…SSSS, and QPAG…SPNM. Over residues 123–135 the composition is skewed to acidic residues; sequence AEGDDGEDEEEGE. Positions 136 to 150 are enriched in low complexity; the sequence is AQGVGKDAVDSSSSS. Basic and acidic residues predominate over residues 259 to 269; that stretch reads DGHEPEPKRPE.

This is Ezy-1 protein (Ezy-1) from Chlamydomonas reinhardtii (Chlamydomonas smithii).